A 223-amino-acid polypeptide reads, in one-letter code: Ribonuclease HII (223 aa).

Residues 32–223 (FHIAGVDEVG…LKGRFRDNMS (192 aa)) enclose the RNase H type-2 domain. Residues D38, E39, and D130 each coordinate a divalent metal cation.

Belongs to the RNase HII family. Mn(2+) serves as cofactor. Mg(2+) is required as a cofactor.

It localises to the cytoplasm. It catalyses the reaction Endonucleolytic cleavage to 5'-phosphomonoester.. Functionally, endonuclease that specifically degrades the RNA of RNA-DNA hybrids. This Bartonella quintana (strain Toulouse) (Rochalimaea quintana) protein is Ribonuclease HII.